Reading from the N-terminus, the 137-residue chain is Small ribosomal subunit protein bS16m (137 aa).

The N-terminal 34 residues, 1–34 (MVHLTTLLCKAYRGGHLTIRLALGGCTNRPFYRI), are a transit peptide targeting the mitochondrion. Threonine 130 carries the phosphothreonine modification.

This sequence belongs to the bacterial ribosomal protein bS16 family. As to quaternary structure, component of the mitochondrial ribosome small subunit (28S) which comprises a 12S rRNA and about 30 distinct proteins.

Its subcellular location is the mitochondrion. This Pongo abelii (Sumatran orangutan) protein is Small ribosomal subunit protein bS16m (MRPS16).